Consider the following 102-residue polypeptide: Large ribosomal subunit protein bL28 (102 aa).

A disordered region spans residues M1–H20.

The protein belongs to the bacterial ribosomal protein bL28 family.

This is Large ribosomal subunit protein bL28 from Bradyrhizobium sp. (strain ORS 278).